The primary structure comprises 890 residues: DNA mismatch repair protein MutS (890 aa).

Residue 607-614 (GPNMSGKS) coordinates ATP. Residues 832-851 (ESQLSFFGTEQSSKKQDKPV) are disordered.

It belongs to the DNA mismatch repair MutS family.

Functionally, this protein is involved in the repair of mismatches in DNA. It is possible that it carries out the mismatch recognition step. This protein has a weak ATPase activity. The sequence is that of DNA mismatch repair protein MutS from Bacillus cereus (strain 03BB102).